A 142-amino-acid chain; its full sequence is Phenylalanine ammonia-lyase (142 aa).

K66, E94, and N97 together coordinate (E)-cinnamate.

This sequence belongs to the PAL/histidase family. In terms of assembly, homotetramer. In terms of processing, contains an active site 4-methylidene-imidazol-5-one (MIO), which is formed autocatalytically by cyclization and dehydration of residues Ala-Ser-Gly.

It is found in the cytoplasm. It carries out the reaction L-phenylalanine = (E)-cinnamate + NH4(+). It functions in the pathway phenylpropanoid metabolism; trans-cinnamate biosynthesis; trans-cinnamate from L-phenylalanine: step 1/1. In terms of biological role, catalyzes the non-oxidative deamination of L-phenylalanine to form trans-cinnamic acid and a free ammonium ion. Facilitates the commitment step in phenylpropanoid pathways that produce secondary metabolites such as lignins, coumarins and flavonoids. The chain is Phenylalanine ammonia-lyase (palA) from Agaricus bisporus (White button mushroom).